Reading from the N-terminus, the 274-residue chain is Mitochondrial S-adenosylmethionine carrier protein (274 aa).

3 Solcar repeats span residues 4–77 (PGFT…VKSL), 86–168 (FKPV…LKAL), and 177–265 (VDSW…ARSL). The next 6 membrane-spanning stretches (helical) occupy residues 5-25 (GFTA…LILF), 49-69 (IYAG…AFFL), 85-105 (HFKP…ACLI), 142-162 (RGYK…FPLW), 182-202 (SAVC…PLDV), and 238-258 (FAGV…FLGA).

Belongs to the mitochondrial carrier (TC 2.A.29) family.

Its subcellular location is the mitochondrion inner membrane. The enzyme catalyses S-adenosyl-L-homocysteine(out) + S-adenosyl-L-methionine(in) = S-adenosyl-L-homocysteine(in) + S-adenosyl-L-methionine(out). Mitochondrial S-adenosyl-L-methionine/S-adenosyl-L-homocysteine antiporter. Mediates the exchange of cytosolic S-adenosyl-L-methionine, the predominant methyl-group donor for macromolecule methylation processes, for mitochondrial S-adenosylhomocysteine(SAH), a by-product of methylation reactions. The polypeptide is Mitochondrial S-adenosylmethionine carrier protein (Mus musculus (Mouse)).